We begin with the raw amino-acid sequence, 319 residues long: Triacylglycerol lipase (319 aa).

The 279-residue stretch at 10–288 (PVILVHGLAG…TSYHWNHLDE (279 aa)) folds into the AB hydrolase-1 domain. Leucine 17 provides a ligand contact to substrate. Serine 87 functions as the Nucleophile in the catalytic mechanism. Glutamine 88 is a substrate binding site. A disulfide bond links cysteine 190 and cysteine 269. Position 241 (aspartate 241) interacts with Ca(2+). Active-site charge relay system residues include aspartate 263 and histidine 285. Residues aspartate 287, glutamine 291, and valine 295 each contribute to the Ca(2+) site.

Belongs to the AB hydrolase superfamily. Pseudomonas lipase family. Monomer. Interacts with lipase-specific foldase Lif. Ca(2+) serves as cofactor.

It is found in the secreted. It catalyses the reaction a triacylglycerol + H2O = a diacylglycerol + a fatty acid + H(+). Catalyzes the hydrolysis of triacylglycerol. This is Triacylglycerol lipase from Pseudarthrobacter phenanthrenivorans (Arthrobacter phenanthrenivorans).